The sequence spans 481 residues: ATP synthase subunit beta (481 aa).

Position 167–174 (167–174) interacts with ATP; sequence GGAGVGKT.

This sequence belongs to the ATPase alpha/beta chains family. In terms of assembly, F-type ATPases have 2 components, CF(1) - the catalytic core - and CF(0) - the membrane proton channel. CF(1) has five subunits: alpha(3), beta(3), gamma(1), delta(1), epsilon(1). CF(0) has three main subunits: a(1), b(2) and c(9-12). The alpha and beta chains form an alternating ring which encloses part of the gamma chain. CF(1) is attached to CF(0) by a central stalk formed by the gamma and epsilon chains, while a peripheral stalk is formed by the delta and b chains.

The protein localises to the cell membrane. It catalyses the reaction ATP + H2O + 4 H(+)(in) = ADP + phosphate + 5 H(+)(out). In terms of biological role, produces ATP from ADP in the presence of a proton gradient across the membrane. The catalytic sites are hosted primarily by the beta subunits. The protein is ATP synthase subunit beta of Corynebacterium jeikeium (strain K411).